The sequence spans 264 residues: tRNA pseudouridine synthase A (264 aa).

Aspartate 51 acts as the Nucleophile in catalysis. Tyrosine 109 contributes to the substrate binding site.

It belongs to the tRNA pseudouridine synthase TruA family. In terms of assembly, homodimer.

The catalysed reaction is uridine(38/39/40) in tRNA = pseudouridine(38/39/40) in tRNA. Formation of pseudouridine at positions 38, 39 and 40 in the anticodon stem and loop of transfer RNAs. The polypeptide is tRNA pseudouridine synthase A (Polaromonas naphthalenivorans (strain CJ2)).